The chain runs to 610 residues: Myosin light chain kinase 2, skeletal/cardiac muscle (610 aa).

2 disordered regions span residues 1 to 168 and 196 to 240; these read MATE…HSPS and VSET…DTSQ. Alanine 2 carries the N-acetylalanine modification. Basic and acidic residues-rich tracts occupy residues 32 to 63 and 70 to 82; these read SEKE…KKNP and KTPE…KKGD. The segment covering 94 to 109 has biased composition (gly residues); it reads SGEGDGGGGPAEGGTG. Residues 141–157 show a composition bias toward basic and acidic residues; the sequence is GEAKAGKKAAECREAGR. A phosphoserine mark is found at serine 160, serine 166, and serine 168. One can recognise a Protein kinase domain in the interval 299-554; sequence MNSKEALGGG…AEQCLAHPWL (256 aa). ATP-binding positions include 305–313 and lysine 328; that span reads LGGGKFGAV. The Proton acceptor role is filled by aspartate 420. A Phosphothreonine modification is found at threonine 459. The segment at 588–600 is calmodulin-binding; it reads IAVSAANRFKKIS.

It belongs to the protein kinase superfamily. CAMK Ser/Thr protein kinase family. As to quaternary structure, may interact with centrin.

The protein resides in the cytoplasm. The enzyme catalyses L-seryl-[myosin light chain] + ATP = O-phospho-L-seryl-[myosin light chain] + ADP + H(+). The catalysed reaction is L-threonyl-[myosin light chain] + ATP = O-phospho-L-threonyl-[myosin light chain] + ADP + H(+). In terms of biological role, implicated in the level of global muscle contraction and cardiac function. Phosphorylates a specific serine in the N-terminus of a myosin light chain. This is Myosin light chain kinase 2, skeletal/cardiac muscle (Mylk2) from Rattus norvegicus (Rat).